Reading from the N-terminus, the 253-residue chain is Spermatogenesis-associated protein 9 (253 aa).

The chain crosses the membrane as a helical span at residues Leu144 to Leu166. A compositionally biased stretch (basic and acidic residues) spans Ala210–Lys228. A disordered region spans residues Ala210–Ala231.

The protein resides in the membrane. In terms of biological role, may play at role in testicular development/spermatogenesis and may be an important factor in male infertility. The sequence is that of Spermatogenesis-associated protein 9 (SPATA9) from Bos taurus (Bovine).